Here is a 480-residue protein sequence, read N- to C-terminus: MDEFEEYRNPLTKRYASREMVCNFGEKRKVILWRQLWIWLAETQKELGFDITDEQINEMKSQRDSVDFGTAAAEEKARRHDVMAHVYTFALACPKAAPIIHLGATSCFVGDNADLIMLKDGLNILLPKVARCIDRLAKKAMLHKSLICLARTHLQPAQPTTMGRRICMWIQDLLLDLENLERLKNHTIRFRGAKGAVGTQASFMDLFQGDHQKVIKLDEILTKKSGFQRSWCVTGQTYPRKVDIEITNALSNIGATVHKICTDIRLLSSFHEVEEPFETKQIGSSAMPYKRNPIRSERACSLARYLMHISTSMVSTVSVQWLERSLDDSAIRRIVLPEAFLAADACLTLLQNIAEGLIVYPMVMEANLNSELPFLVVERILVKMVSEGAANRQECHERLRKHSHEAAAEIKLKGLKNSLMDKLLNDYYFAPIHSLLPTVLDPSYMIGRAVEQVEVFLNTEVDPAIHSYKDCLALNSNITI.

Residues arginine 14, tyrosine 15, arginine 79, histidine 80, and aspartate 81 each coordinate AMP. Histidine 80 lines the fumarate pocket. The Proton donor/acceptor role is filled by histidine 153. An AMP-binding site is contributed by glutamine 236. A fumarate-binding site is contributed by glutamine 236. Glutamine 236 lines the N(6)-(1,2-dicarboxyethyl)-AMP pocket. Residue serine 284 is the Proton donor/acceptor of the active site. Fumarate is bound by residues serine 285, lysine 290, and asparagine 292. Residues serine 285, lysine 290, and asparagine 292 each coordinate N(6)-(1,2-dicarboxyethyl)-AMP. Arginine 298 is a binding site for AMP. 3 residues coordinate N(6)-(1,2-dicarboxyethyl)-AMP: arginine 324, serine 329, and arginine 333. The AMP site is built by serine 329 and arginine 333.

It belongs to the lyase 1 family. Adenylosuccinate lyase subfamily. Homotetramer.

It carries out the reaction N(6)-(1,2-dicarboxyethyl)-AMP = fumarate + AMP. Its pathway is purine metabolism; AMP biosynthesis via salvage pathway. Functionally, catalyzes conversion of succinyladenosine monophosphate (SAMP) to AMP and fumarate on the purine salvage pathway. This Schistosoma mansoni (Blood fluke) protein is Adenylosuccinate lyase.